The following is a 272-amino-acid chain: L-aspartate dehydrogenase (272 aa).

NAD(+)-binding residues include Ala-125 and Asn-192. Residue His-222 is part of the active site.

The protein belongs to the L-aspartate dehydrogenase family.

The enzyme catalyses L-aspartate + NADP(+) + H2O = oxaloacetate + NH4(+) + NADPH + H(+). It carries out the reaction L-aspartate + NAD(+) + H2O = oxaloacetate + NH4(+) + NADH + H(+). It participates in cofactor biosynthesis; NAD(+) biosynthesis; iminoaspartate from L-aspartate (dehydrogenase route): step 1/1. Functionally, specifically catalyzes the NAD or NADP-dependent dehydrogenation of L-aspartate to iminoaspartate. The sequence is that of L-aspartate dehydrogenase from Nitrosopumilus maritimus (strain SCM1).